A 1132-amino-acid chain; its full sequence is Phosphatidylinositide phosphatase SAC2 (1132 aa).

Residues 167–518 (LKMFMDSESF…GDSISRQYAG (352 aa)) enclose the SAC domain. The 168-residue stretch at 593–760 (RSHQELISQL…KSSKPHEDII (168 aa)) folds into the hSac2 domain. 2 positions are modified to phosphoserine: serine 827 and serine 830. The interval 846-875 (ESDGDMSSDNDSYHSDEFLTNSKSDEDRQL) is disordered. Basic and acidic residues predominate over residues 856-874 (DSYHSDEFLTNSKSDEDRQ). Serine 878, serine 881, serine 907, and serine 910 each carry phosphoserine. 2 disordered regions span residues 923 to 942 (VAHG…KSPS) and 974 to 1017 (LSET…LDVS). Position 1103 is a phosphoserine (serine 1103).

In terms of assembly, homodimer. Interacts with OCRL and RAB5A. Interacts with INPP5B and INPP4A. Interacts with STAT3; the interaction is independent of STAT3 'Tyr-705' phosphorylation status. As to expression, ubiquitous. Highly expressed in brain.

The protein resides in the membrane. The protein localises to the clathrin-coated pit. It localises to the early endosome. Its subcellular location is the recycling endosome. It catalyses the reaction a myo-inositol phosphate + H2O = myo-inositol + phosphate. In terms of biological role, inositol 4-phosphatase which mainly acts on phosphatidylinositol 4-phosphate. May be functionally linked to OCRL, which converts phosphatidylinositol 4,5-bisphosphate to phosphatidylinositol, for a sequential dephosphorylation of phosphatidylinositol 4,5-bisphosphate at the 5 and 4 position of inositol, thus playing an important role in the endocytic recycling. Regulator of TF:TFRC and integrins recycling pathway, is also involved in cell migration mechanisms. Modulates AKT/GSK3B pathway by decreasing AKT and GSK3B phosphorylation. Negatively regulates STAT3 signaling pathway through inhibition of STAT3 phosphorylation and translocation to the nucleus. Functionally important modulator of cardiac myocyte size and of the cardiac response to stress. May play a role as negative regulator of axon regeneration after central nervous system injuries. This Homo sapiens (Human) protein is Phosphatidylinositide phosphatase SAC2.